The primary structure comprises 282 residues: Pantothenate synthetase (282 aa).

Residue 30-37 (MGFLHDGH) participates in ATP binding. His-37 (proton donor) is an active-site residue. Position 60 (Gln-60) interacts with (R)-pantoate. Position 60 (Gln-60) interacts with beta-alanine. 146-149 (GQKD) provides a ligand contact to ATP. Gln-152 is a (R)-pantoate binding site. Residues Ile-175 and 183-186 (KSSR) contribute to the ATP site.

It belongs to the pantothenate synthetase family. In terms of assembly, homodimer.

The protein resides in the cytoplasm. The enzyme catalyses (R)-pantoate + beta-alanine + ATP = (R)-pantothenate + AMP + diphosphate + H(+). It participates in cofactor biosynthesis; (R)-pantothenate biosynthesis; (R)-pantothenate from (R)-pantoate and beta-alanine: step 1/1. In terms of biological role, catalyzes the condensation of pantoate with beta-alanine in an ATP-dependent reaction via a pantoyl-adenylate intermediate. This Campylobacter jejuni subsp. doylei (strain ATCC BAA-1458 / RM4099 / 269.97) protein is Pantothenate synthetase.